The sequence spans 434 residues: Trigger factor (434 aa).

The 86-residue stretch at 161 to 246 (EDRVTVDFSG…LKKVEERELP (86 aa)) folds into the PPIase FKBP-type domain.

This sequence belongs to the FKBP-type PPIase family. Tig subfamily.

The protein localises to the cytoplasm. It catalyses the reaction [protein]-peptidylproline (omega=180) = [protein]-peptidylproline (omega=0). Involved in protein export. Acts as a chaperone by maintaining the newly synthesized protein in an open conformation. Functions as a peptidyl-prolyl cis-trans isomerase. This Serratia proteamaculans (strain 568) protein is Trigger factor.